Here is a 68-residue protein sequence, read N- to C-terminus: UPF0291 protein TTE2340 (68 aa).

Belongs to the UPF0291 family.

Its subcellular location is the cytoplasm. The sequence is that of UPF0291 protein TTE2340 from Caldanaerobacter subterraneus subsp. tengcongensis (strain DSM 15242 / JCM 11007 / NBRC 100824 / MB4) (Thermoanaerobacter tengcongensis).